The following is a 1885-amino-acid chain: Chitin synthase 5 (1885 aa).

In terms of domain architecture, Myosin motor spans 1–789 (MATRGNVPAH…SIALTGSQAA (789 aa)). Residue 99 to 106 (GESGSGKT) coordinates ATP. Residues N219 and N429 are each glycosylated (N-linked (GlcNAc...) asparagine). Residues 601–649 (KPLRMPSVSRKKHDQLRRMASRRADRSPAPQEEEPLPGTEEAKVRRTKP) are disordered. The span at 609–621 (SRKKHDQLRRMAS) shows a compositional bias: basic residues. Positions 666–690 (LDNITKSLTAPNVNNYFVFCLKPND) are actin-binding. Residue N668 is glycosylated (N-linked (GlcNAc...) asparagine). A disordered region spans residues 794–817 (GDIGSPSRPDTPGHNPFSDSKARL). Transmembrane regions (helical) follow at residues 894–914 (WLAI…KWIG) and 929–949 (FAIN…IIVF). The Cytochrome b5 heme-binding domain occupies 957-1016 (QNVYSAAELSAHDGKGKHSAYVAIRGQVFDLGAFMPNHYPKIIPQSSLKKYAGVDATGLF). N-linked (GlcNAc...) asparagine glycans are attached at residues N1043 and N1068. A helical membrane pass occupies residues 1205–1225 (ILLAVSILLCSVIGFKFFAAL). N-linked (GlcNAc...) asparagine glycosylation is found at N1462 and N1568. The next 3 membrane-spanning stretches (helical) occupy residues 1599-1619 (LLST…IVLL), 1626-1646 (VPLT…IIFI), and 1653-1673 (MIGW…GLPL). 2 N-linked (GlcNAc...) asparagine glycosylation sites follow: N1759 and N1790. The 56-residue stretch at 1827 to 1882 (LPTDDMLLNEIRDILRTADLMTVTKKGIKQELERRFNVNLDMKRAYIGSATEAILS) folds into the DEK-C domain.

It in the N-terminal section; belongs to the TRAFAC class myosin-kinesin ATPase superfamily. Myosin family. The protein in the C-terminal section; belongs to the chitin synthase family. Class V subfamily. Maximal activity requires trypsin activation, suggesting a zymogenic nature.

It is found in the cell membrane. The protein resides in the membrane. It carries out the reaction [(1-&gt;4)-N-acetyl-beta-D-glucosaminyl](n) + UDP-N-acetyl-alpha-D-glucosamine = [(1-&gt;4)-N-acetyl-beta-D-glucosaminyl](n+1) + UDP + H(+). Functionally, polymerizes chitin, a structural polymer of the cell wall and septum, by transferring the sugar moiety of UDP-GlcNAc to the non-reducing end of the growing chitin polymer. CHS5 is required for the sustained growth at 37 degrees Celsius and is of critical importance for virulence. Especially important at infection temperatures for maintaining the cell wall integrity of developing yeast buds, elongating tips of hyphae, and random sites of expansion in sclerotic forms. This Exophiala dermatitidis (Black yeast-like fungus) protein is Chitin synthase 5.